The primary structure comprises 346 residues: Peripherin-2 (346 aa).

Topologically, residues 1 to 24 (MALLKVKFDQKKRVKLAQGLWLMN) are cytoplasmic. A helical transmembrane segment spans residues 25 to 43 (WLSVLAGIVIFSLGLFLKI). The Lumenal segment spans residues 44–61 (ELRKRSDVMNNSESHFVP). Asn53 carries an N-linked (GlcNAc...) asparagine glycan. The helical transmembrane segment at 62–80 (NSLIVMGVLSCVFNSLAGK) threads the bilayer. Over 81 to 99 (ICYDALDPAKYAKWKPWLK) the chain is Cytoplasmic. The helical transmembrane segment at 100–123 (PYLAVCVLFNIALFLVTLCCFLMR) threads the bilayer. The Lumenal portion of the chain corresponds to 124–264 (GSLESTLAHG…LSYYSSLMNS (141 aa)). The N-linked (GlcNAc...) asparagine glycan is linked to Asn229. Residues 265-290 (MGAVTLLVWLFEVTITIGLRYLHTAL) traverse the membrane as a helical segment. Over 291 to 346 (EGVSNPEDPECESEGWLLEKSVSETWKAFLESLKKLGKSNQVEAEGADAGQAPEAG) the chain is Cytoplasmic. The interval 341–346 (QAPEAG) is interaction with MREG.

Belongs to the PRPH2/ROM1 family. Homodimer; disulfide-linked. Forms a homotetramer. Forms a heterotetramer with ROM1. Homotetramer and heterotetramer core complexes go on to form higher order complexes by formation of intermolecular disulfide bonds. Interacts with MREG. Interacts with STX3. Interacts with SNAP25. Retina (photoreceptor). In rim region of ROS (rod outer segment) disks.

The protein localises to the membrane. The protein resides in the cell projection. Its subcellular location is the cilium. It localises to the photoreceptor outer segment. It is found in the photoreceptor inner segment. Functionally, essential for retina photoreceptor outer segment disk morphogenesis, may also play a role with ROM1 in the maintenance of outer segment disk structure. Required for the maintenance of retinal outer nuclear layer thickness. Required for the correct development and organization of the photoreceptor inner segment. The sequence is that of Peripherin-2 (PRPH2) from Canis lupus familiaris (Dog).